Here is a 229-residue protein sequence, read N- to C-terminus: 7-cyano-7-deazaguanine synthase (229 aa).

9–19 is a binding site for ATP; sequence LSGGLDSTTVL. Zn(2+) is bound by residues Cys-192, Cys-202, Cys-205, and Cys-208.

The protein belongs to the QueC family. The cofactor is Zn(2+).

It carries out the reaction 7-carboxy-7-deazaguanine + NH4(+) + ATP = 7-cyano-7-deazaguanine + ADP + phosphate + H2O + H(+). It participates in purine metabolism; 7-cyano-7-deazaguanine biosynthesis. In terms of biological role, catalyzes the ATP-dependent conversion of 7-carboxy-7-deazaguanine (CDG) to 7-cyano-7-deazaguanine (preQ(0)). This is 7-cyano-7-deazaguanine synthase from Kineococcus radiotolerans (strain ATCC BAA-149 / DSM 14245 / SRS30216).